A 289-amino-acid polypeptide reads, in one-letter code: tRNA pseudouridine synthase A (289 aa).

The active-site Nucleophile is Asp-67. Tyr-125 serves as a coordination point for substrate.

It belongs to the tRNA pseudouridine synthase TruA family. As to quaternary structure, homodimer.

It catalyses the reaction uridine(38/39/40) in tRNA = pseudouridine(38/39/40) in tRNA. Formation of pseudouridine at positions 38, 39 and 40 in the anticodon stem and loop of transfer RNAs. This is tRNA pseudouridine synthase A from Prochlorococcus marinus (strain MIT 9211).